A 192-amino-acid chain; its full sequence is Erythropoietin (192 aa).

The N-terminal stretch at 1 to 26 (MGVPERPTLLLLLSLLLIPLGLPVLC) is a signal peptide. An intrachain disulfide couples Cys33 to Cys187. Asn50, Asn64, and Asn109 each carry an N-linked (GlcNAc...) asparagine glycan.

This sequence belongs to the EPO/TPO family. As to expression, produced by kidney or liver of adult mammals and by liver of fetal or neonatal mammals.

It localises to the secreted. Its function is as follows. Hormone involved in the regulation of erythrocyte proliferation and differentiation and the maintenance of a physiological level of circulating erythrocyte mass. Binds to EPOR leading to EPOR dimerization and JAK2 activation thereby activating specific downstream effectors, including STAT1 and STAT3. In Rattus norvegicus (Rat), this protein is Erythropoietin (Epo).